Here is a 225-residue protein sequence, read N- to C-terminus: NAD(P)H-quinone oxidoreductase subunit K, chloroplastic (225 aa).

Cysteine 43, cysteine 44, cysteine 108, and cysteine 139 together coordinate [4Fe-4S] cluster.

Belongs to the complex I 20 kDa subunit family. In terms of assembly, NDH is composed of at least 16 different subunits, 5 of which are encoded in the nucleus. [4Fe-4S] cluster is required as a cofactor.

Its subcellular location is the plastid. The protein resides in the chloroplast thylakoid membrane. The catalysed reaction is a plastoquinone + NADH + (n+1) H(+)(in) = a plastoquinol + NAD(+) + n H(+)(out). It carries out the reaction a plastoquinone + NADPH + (n+1) H(+)(in) = a plastoquinol + NADP(+) + n H(+)(out). Its function is as follows. NDH shuttles electrons from NAD(P)H:plastoquinone, via FMN and iron-sulfur (Fe-S) centers, to quinones in the photosynthetic chain and possibly in a chloroplast respiratory chain. The immediate electron acceptor for the enzyme in this species is believed to be plastoquinone. Couples the redox reaction to proton translocation, and thus conserves the redox energy in a proton gradient. The chain is NAD(P)H-quinone oxidoreductase subunit K, chloroplastic from Arabidopsis thaliana (Mouse-ear cress).